The sequence spans 1429 residues: Nitric oxide synthase 1 (1429 aa).

The interaction with NOSIP stretch occupies residues 1–200 (MEENTFGVQQ…LQDIGEHDEL (200 aa)). In terms of domain architecture, PDZ spans 17–99 (SVRLFKRKVG…ETHVVLILRG (83 aa)). Disordered stretches follow at residues 152–174 (VTGL…SVSQ), 214–255 (GSKA…DNDR), and 271–298 (NNPY…SRCP). Residues 160-174 (QHAQGHGQGAGSVSQ) show a composition bias toward low complexity. Residues 163-240 (QGHGQGAGSV…TGIQVDRDLD (78 aa)) form an interaction with DYNLL1/PIN region. Residues 226–243 (AEMKDTGIQVDRDLDGKS) are compositionally biased toward basic and acidic residues. A Phosphoserine modification is found at Ser280. The span at 280–294 (SPTSGKQSPTKNGSP) shows a compositional bias: polar residues. Residue Ser334 participates in (6R)-L-erythro-5,6,7,8-tetrahydrobiopterin binding. Cys415 contacts heme b. The L-arginine site is built by Gln478, Trp587, Tyr588, and Glu592. Val677, Trp678, and Phe691 together coordinate (6R)-L-erythro-5,6,7,8-tetrahydrobiopterin. Position 706 (Tyr706) interacts with heme b. A calmodulin-binding region spans residues 725 to 745 (KRRAIGFKKLAEAVKFSAKLM). A Flavodoxin-like domain is found at 755-935 (ATILYATETG…AFRTWAKKVF (181 aa)). FMN contacts are provided by Thr761, Glu762, Thr763, Lys765, Ser766, Ser807, Thr808, and Gly812. Ser847, Ser857, and Ser858 each carry phosphoserine. 5 residues coordinate FMN: Ser886, His891, Cys893, Glu919, and Gln923. The FAD-binding FR-type domain occupies 990 to 1237 (KRVSAARLLS…VRGAPSFHLP (248 aa)). NADP(+) is bound at residue Arg1010. FAD contacts are provided by His1032, Arg1173, Tyr1174, Tyr1175, Ser1176, Thr1191, and Ala1193. An NADP(+)-binding site is contributed by Ser1196. 4 residues coordinate FAD: Tyr1197, Val1210, Cys1211, and Ser1212. Thr1251, Arg1284, Ser1313, Arg1314, Lys1320, Tyr1322, Gln1324, Asp1357, Thr1398, and Arg1400 together coordinate NADP(+).

This sequence belongs to the NOS family. As to quaternary structure, homodimer. Interacts with DLG4 (via N-terminal tandem pair of PDZ domains); the interaction possibly being prevented by the association between NOS1 and CAPON. Forms a ternary complex with CAPON and RASD1. Forms a ternary complex with CAPON and SYN1. Interacts with ZDHHC23. Interacts with NOSIP; which may impair its synaptic location. Interacts with HTR4. Interacts with SLC6A4. Interacts with VAC14. Forms a complex with ASL, ASS1 and SLC7A1; the complex regulates cell-autonomous L-arginine synthesis and citrulline recycling while channeling extracellular L-arginine to nitric oxide synthesis pathway. Interacts with DMD; localizes NOS1 to sarcolemma in muscle cells. Interacts with DYNLL1; inhibits the nitric oxide synthase activity. Heme b is required as a cofactor. FAD serves as cofactor. Requires FMN as cofactor. The cofactor is (6R)-L-erythro-5,6,7,8-tetrahydrobiopterin. In terms of processing, ubiquitinated; mediated by STUB1/CHIP in the presence of Hsp70 and Hsp40 (in vitro). Isoform N-NOS-1 is expressed in brain and colorectum. Found in the Auerbach's plexus of the enteric nervous system. Isoform PNNOS is expressed in the penis, urethra, prostate, and skeletal muscle, and coexists with the cerebellar nnos in the pelvic plexus, bladder and liver, and is detectable in the cerebellum.

It is found in the cell membrane. The protein localises to the sarcolemma. The protein resides in the cell projection. Its subcellular location is the dendritic spine. It carries out the reaction 2 L-arginine + 3 NADPH + 4 O2 + H(+) = 2 L-citrulline + 2 nitric oxide + 3 NADP(+) + 4 H2O. With respect to regulation, stimulated by calcium/calmodulin. Inhibited by DYNLL1 that prevents the dimerization of the protein. Inhibited by NOSIP. In terms of biological role, produces nitric oxide (NO) which is a messenger molecule with diverse functions throughout the body. In the brain and peripheral nervous system, NO displays many properties of a neurotransmitter. Inhibitory transmitter for non-adrenergic and non-cholinergic nerves in the colorectum. Probably has nitrosylase activity and mediates cysteine S-nitrosylation of cytoplasmic target proteins such SRR. Inhibitory transmitter for non-adrenergic and non-cholinergic nerves in the colorectum. The sequence is that of Nitric oxide synthase 1 from Rattus norvegicus (Rat).